The primary structure comprises 226 residues: Molybdenum transport system permease protein ModB (226 aa).

Positions 11–217 (IRLTLELASL…SFLVLFALYS (207 aa)) constitute an ABC transmembrane type-1 domain. A run of 5 helical transmembrane segments spans residues 17–37 (LASL…WWLA), 47–67 (IGAV…FYLL), 88–108 (LPFT…PFVV), 150–170 (ITAA…VLMI), and 197–217 (AHWL…ALYS).

The protein belongs to the binding-protein-dependent transport system permease family. CysTW subfamily.

The protein localises to the cell inner membrane. Functionally, part of the binding-protein-dependent transport system for molybdenum; probably responsible for the translocation of the substrate across the membrane. This chain is Molybdenum transport system permease protein ModB (modB), found in Azotobacter vinelandii.